Here is a 391-residue protein sequence, read N- to C-terminus: Beta sliding clamp (391 aa).

It belongs to the beta sliding clamp family. As to quaternary structure, forms a ring-shaped head-to-tail homodimer around DNA which binds and tethers DNA polymerases and other proteins to the DNA. The DNA replisome complex has a single clamp-loading complex (3 tau and 1 each of delta, delta', psi and chi subunits) which binds 3 Pol III cores (1 core on the leading strand and 2 on the lagging strand) each with a beta sliding clamp dimer. Additional proteins in the replisome are other copies of gamma, psi and chi, Ssb, DNA helicase and RNA primase.

It is found in the cytoplasm. Its function is as follows. Confers DNA tethering and processivity to DNA polymerases and other proteins. Acts as a clamp, forming a ring around DNA (a reaction catalyzed by the clamp-loading complex) which diffuses in an ATP-independent manner freely and bidirectionally along dsDNA. Initially characterized for its ability to contact the catalytic subunit of DNA polymerase III (Pol III), a complex, multichain enzyme responsible for most of the replicative synthesis in bacteria; Pol III exhibits 3'-5' exonuclease proofreading activity. The beta chain is required for initiation of replication as well as for processivity of DNA replication. This Synechocystis sp. (strain ATCC 27184 / PCC 6803 / Kazusa) protein is Beta sliding clamp (dnaN).